Consider the following 877-residue polypeptide: G-protein coupled receptor family C group 6 member A (877 aa).

The N-terminal stretch at 1 to 24 (MAGLDLSLVLMLSVLAGVREVSLT) is a signal peptide. Over 25–567 (QVNQQGVIAP…EYFEWNSGFA (543 aa)) the chain is Extracellular. 8 N-linked (GlcNAc...) asparagine glycosylation sites follow: N53, N99, N135, N263, N310, N322, N338, and N358. D388 provides a ligand contact to L-lysine. Residues N430, N475, N484, N528, and N548 are each glycosylated (N-linked (GlcNAc...) asparagine). Residues 568 to 588 (IALLTLAALGILLLISMSALF) form a helical membrane-spanning segment. The Cytoplasmic portion of the chain corresponds to 589–603 (FWQRNSLVVKAAGGP). The chain crosses the membrane as a helical span at residues 604 to 624 (LCHLILFSLLGSFISVIFFVG). Topologically, residues 625–635 (EPSNESCRVRQ) are extracellular. N628 is a glycosylation site (N-linked (GlcNAc...) asparagine). A helical membrane pass occupies residues 636–656 (VIFGLSFTLCVSCILVKSLKI). The Cytoplasmic segment spans residues 657-676 (LLAFQMNLELKELLRKLYKP). The helical transmembrane segment at 677–697 (YVIVCMCMGLQVTICTLWLTL) threads the bilayer. The Extracellular portion of the chain corresponds to 698 to 720 (HRPFIEKVVQPKSILLECNEGSD). A helical transmembrane segment spans residues 721–741 (LMFGLMLGYIVLLALICFTFA). Over 742–755 (YKGRKLPQKYNEAK) the chain is Cytoplasmic. A helical transmembrane segment spans residues 756-776 (FITFGMLIYLMAWVIFIPVHV). Residues 777-782 (TTSGKY) lie on the Extracellular side of the membrane. A helical transmembrane segment spans residues 783 to 803 (VPAVEVVVILISNYGILSCHF). The Cytoplasmic portion of the chain corresponds to 804 to 877 (LPKCYIIIFK…VSVPEIDNVL (74 aa)).

It belongs to the G-protein coupled receptor 3 family. As to quaternary structure, homodimer; disulfide-linked. As to expression, expressed in olfactory epithelium. Also expressed in gills, tongue, lips and palatal organ. Not expressed in brain, kidney, liver, muscle, intestine, ovary and skin. In olfactory epithelium, it is widely expressed over the apical and medial portions of the olfactory sensory neurons, regions that contain olfactory neurons. Expressed in external epithelia, which contains taste buds and solitary chemosensory cells. On gill rakers, it is widely expressed in the surface epithelium, but excluded from taste buds.

Its subcellular location is the cell membrane. Functionally, olfactory receptor that is activated by amino acids that act as potent odorants in fish. Most highly activated by basic amino acids such as L-lysine and L-arginine. The polypeptide is G-protein coupled receptor family C group 6 member A (gprc6a) (Carassius auratus (Goldfish)).